We begin with the raw amino-acid sequence, 57 residues long: Small ribosomal subunit protein eS31 (57 aa).

Zn(2+)-binding residues include Cys29, Cys32, Cys47, and Cys50. A C4-type zinc finger spans residues 29 to 50 (CPRCGPGVFMANHKDRWSCGRC).

It belongs to the eukaryotic ribosomal protein eS31 family. In terms of assembly, part of the 30S ribosomal subunit. Requires Zn(2+) as cofactor.

The sequence is that of Small ribosomal subunit protein eS31 from Thermococcus kodakarensis (strain ATCC BAA-918 / JCM 12380 / KOD1) (Pyrococcus kodakaraensis (strain KOD1)).